A 364-amino-acid chain; its full sequence is S-adenosylmethionine:tRNA ribosyltransferase-isomerase (364 aa).

The protein belongs to the QueA family. As to quaternary structure, monomer.

Its subcellular location is the cytoplasm. The catalysed reaction is 7-aminomethyl-7-carbaguanosine(34) in tRNA + S-adenosyl-L-methionine = epoxyqueuosine(34) in tRNA + adenine + L-methionine + 2 H(+). It functions in the pathway tRNA modification; tRNA-queuosine biosynthesis. Functionally, transfers and isomerizes the ribose moiety from AdoMet to the 7-aminomethyl group of 7-deazaguanine (preQ1-tRNA) to give epoxyqueuosine (oQ-tRNA). This chain is S-adenosylmethionine:tRNA ribosyltransferase-isomerase, found in Bradyrhizobium sp. (strain ORS 278).